A 126-amino-acid polypeptide reads, in one-letter code: Fluoride-specific ion channel FluC 1 (126 aa).

Helical transmembrane passes span 1 to 21, 38 to 58, 67 to 87, and 99 to 119; these read MAGSALEALLVGIGAIPGAWL, WGTFAVNVIACFGLGLVLALY, LALLIGVGFFGSLSTFSTFAV, and FVSLVLALASIAAGLCAAGVG. Positions 77 and 80 each coordinate Na(+).

Belongs to the fluoride channel Fluc/FEX (TC 1.A.43) family.

The protein resides in the cell inner membrane. The catalysed reaction is fluoride(in) = fluoride(out). Its activity is regulated as follows. Na(+) is not transported, but it plays an essential structural role and its presence is essential for fluoride channel function. Functionally, fluoride-specific ion channel. Important for reducing fluoride concentration in the cell, thus reducing its toxicity. The protein is Fluoride-specific ion channel FluC 1 of Synechococcus sp. (strain CC9902).